The following is a 371-amino-acid chain: Cytochrome b (371 aa).

The next 4 helical transmembrane spans lie at 32–52 (VGFS…CLAW), 76–98 (FVIR…VHIF), 113–133 (VWAV…IGYV), and 179–199 (LHVL…MHLF). Heme b contacts are provided by His-82 and His-96. Residues His-183 and His-197 each coordinate heme b. His-202 contacts a ubiquinone. Transmembrane regions (helical) follow at residues 227–247 (FYLR…YFIF), 296–316 (LMVI…LWFV), 329–349 (LILF…ILAY), and 350–370 (PIWM…VCRL).

The protein belongs to the cytochrome b family. The main subunits of complex b-c1 are: cytochrome b, cytochrome c1 and the Rieske protein. The cofactor is heme b.

It is found in the mitochondrion inner membrane. In terms of biological role, component of the ubiquinol-cytochrome c reductase complex (complex III or cytochrome b-c1 complex) that is part of the mitochondrial respiratory chain. The b-c1 complex mediates electron transfer from ubiquinol to cytochrome c. Contributes to the generation of a proton gradient across the mitochondrial membrane that is then used for ATP synthesis. This is Cytochrome b (MT-CYB) from Leishmania tarentolae (Sauroleishmania tarentolae).